A 396-amino-acid chain; its full sequence is Phosphoglycerate kinase (396 aa).

Substrate is bound by residues aspartate 21–asparagine 23, arginine 36, histidine 59–arginine 62, arginine 118, and arginine 151. ATP contacts are provided by residues lysine 201, glutamate 323, and glycine 353 to threonine 356.

Belongs to the phosphoglycerate kinase family. In terms of assembly, monomer.

The protein resides in the cytoplasm. It carries out the reaction (2R)-3-phosphoglycerate + ATP = (2R)-3-phospho-glyceroyl phosphate + ADP. The protein operates within carbohydrate degradation; glycolysis; pyruvate from D-glyceraldehyde 3-phosphate: step 2/5. The sequence is that of Phosphoglycerate kinase from Granulibacter bethesdensis (strain ATCC BAA-1260 / CGDNIH1).